The following is a 212-amino-acid chain: Large ribosomal subunit protein uL3 (212 aa).

N5-methylglutamine is present on Gln153.

It belongs to the universal ribosomal protein uL3 family. In terms of assembly, part of the 50S ribosomal subunit. Forms a cluster with proteins L14 and L19. Post-translationally, methylated by PrmB.

Functionally, one of the primary rRNA binding proteins, it binds directly near the 3'-end of the 23S rRNA, where it nucleates assembly of the 50S subunit. The polypeptide is Large ribosomal subunit protein uL3 (Dechloromonas aromatica (strain RCB)).